Here is a 483-residue protein sequence, read N- to C-terminus: Elastin-binding protein EbpS (483 aa).

The span at 1–40 shows a compositional bias: basic and acidic residues; that stretch reads MSNNFKDDFEKNRQSIDTNSHQDHTEEVEKDQSELEHQDT. The segment at 1–311 is disordered; it reads MSNNFKDDFE…HHDRDKERKK (311 aa). The segment at 14 to 34 is elastin-binding; it reads QSIDTNSHQDHTEEVEKDQSE. Over residues 64-85 the composition is skewed to polar residues; it reads TNHNKQVHNESQTSEDNVQNEA. Basic and acidic residues-rich tracts occupy residues 103-118, 126-160, and 180-199; these read EPSHQDSTPQHEEEYY, DKSHPEPIEDNDKHETVKDAENNTEHSTVSDKSEA, and SKDKHDDVTVKQYKDESKDH. Over residues 204–222 the composition is skewed to low complexity; the sequence is KGAAIGAGTAGVAGAMAAS. Positions 230-243 are enriched in polar residues; that stretch reads DAQNKSNSGKANNS. Positions 244–256 are enriched in basic and acidic residues; the sequence is TEDKASQDKSKEH. Over residues 275-294 the composition is skewed to low complexity; that stretch reads GAASKSASAASKPHASNNAS. Over residues 296-311 the composition is skewed to basic and acidic residues; it reads NHDEHDHHDRDKERKK. Residues 317 to 337 traverse the membrane as a helical segment; that stretch reads VLLPLIAAVLIIGALAIFGGM. The segment at 348-437 is disordered; it reads ENKIANTNKN…QRQGGGQRHT (90 aa). Residues 358 to 395 show a composition bias toward basic and acidic residues; that stretch reads NADESKDKDTSKDASKDKSKSTDSDKSKEDQDKATKDE. Residues 400 to 428 are compositionally biased toward low complexity; sequence QNNANQANNQAQNNQNQQQANQNQQQQQQ. The region spanning 434–482 is the LysM domain; sequence QRHTVNGQENLYRIAIQYYGSGSPENVEKIRRANGLSGNNIRNGQQIVI.

The protein resides in the cell membrane. Promotes binding of soluble elastin peptides and tropoelastin to S.aureus cells although it is not able to promote bacterial adherence to immobilized elastin and, therefore, is not a microbial surface component recognizing adhesive matrix molecule (MSCRAMM). The polypeptide is Elastin-binding protein EbpS (ebpS) (Staphylococcus aureus (strain bovine RF122 / ET3-1)).